A 113-amino-acid polypeptide reads, in one-letter code: U11-theraphotoxin-Hhn1a (113 aa).

Residues M1 to A21 form the signal peptide. Residues D22 to R74 constitute a propeptide that is removed on maturation. 3 disulfide bridges follow: C75–C90, C82–C95, and C89–C110.

The protein belongs to the neurotoxin 14 (magi-1) family. 01 (HNTX-16) subfamily. In terms of tissue distribution, expressed by the venom gland.

The protein localises to the secreted. Functionally, probable ion channel inhibitor. This chain is U11-theraphotoxin-Hhn1a, found in Cyriopagopus hainanus (Chinese bird spider).